The sequence spans 328 residues: Nuclear transcription factor Y subunit A-8 (328 aa).

The disordered stretch occupies residues 54-86 (KNISFQDQDSSSTLSSAQSSNDVTSSGDDNPSR). The span at 57-75 (SFQDQDSSSTLSSAQSSND) shows a compositional bias: low complexity. The segment covering 76 to 86 (VTSSGDDNPSR) has biased composition (polar residues). A Subunit association domain (SAD) motif is present at residues 175–198 (FVNAKQFHAIMRRRQQRAKLEAQN). A DNA-binding region (NFYA/HAP2-type) is located at residues 205-230 (KPYLHESRHVHALKRPRGSGGRFLNT).

It belongs to the NFYA/HAP2 subunit family. As to quaternary structure, heterotrimeric transcription factor composed of three components, NF-YA, NF-YB and NF-YC. NF-YB and NF-YC must interact and dimerize for NF-YA association and DNA binding. As to expression, expressed in the whole plant, except roots.

It localises to the nucleus. Stimulates the transcription of various genes by recognizing and binding to a CCAAT motif in promoters. The sequence is that of Nuclear transcription factor Y subunit A-8 (NFYA8) from Arabidopsis thaliana (Mouse-ear cress).